A 307-amino-acid polypeptide reads, in one-letter code: Probable protein S-acyltransferase 14 (307 aa).

2 helical membrane passes run 22–42 and 63–83; these read LGSI…YAVV and ILIL…SVVF. A DHHC domain is found at 127-177; that stretch reads RFCRKCNQLKPSRCHHCSVCGRCVLKMDHHCVWVVNCVGALNYKYFLLFLF. The S-palmitoyl cysteine intermediate role is filled by Cys-157. 2 helical membrane passes run 171–191 and 213–233; these read YFLL…LVLM and TFLA…FLIM.

It belongs to the DHHC palmitoyltransferase family.

Its subcellular location is the golgi apparatus. It localises to the trans-Golgi network membrane. It catalyses the reaction L-cysteinyl-[protein] + hexadecanoyl-CoA = S-hexadecanoyl-L-cysteinyl-[protein] + CoA. Its function is as follows. Palmitoyl acyltransferase. The sequence is that of Probable protein S-acyltransferase 14 (PAT14) from Arabidopsis thaliana (Mouse-ear cress).